We begin with the raw amino-acid sequence, 201 residues long: MPRAVAGPEIERLIQLIARLPGLGPRSARRVALHLIKKREALMAPLAAAMTDALGKIVECRRCGNVDVCDPCTICTDTSRDRRTLVVVADVGDLWALERAGVLNAPYHVLGGVLSPLDGVGPEDLNLAKLVTRVHEDEVGEVILALGATVDGQTTAHYITDLLREAHVRVTRLAQGVPVGGELDYLDEGTLSAAIRARTQM.

The segment at 60–75 (CRRCGNVDVCDPCTIC) adopts a C4-type zinc-finger fold. Positions 83-178 (RTLVVVADVG…RVTRLAQGVP (96 aa)) constitute a Toprim domain.

The protein belongs to the RecR family.

Its function is as follows. May play a role in DNA repair. It seems to be involved in an RecBC-independent recombinational process of DNA repair. It may act with RecF and RecO. The sequence is that of Recombination protein RecR from Xanthobacter autotrophicus (strain ATCC BAA-1158 / Py2).